Reading from the N-terminus, the 379-residue chain is Transcription termination factor 1a, mitochondrial (379 aa).

A mitochondrion-targeting transit peptide spans 1–37 (MASRNIWCVRRNFLFDLRDWMLQYSAEVFLKSISFRP). Interaction with DNA stretches follow at residues 151–152 (RS), 229–233 (QSTKR), 306–313 (SEKKFNDK), 337–340 (SINT), and 366–373 (SQRRYEAK).

This sequence belongs to the mTERF family. As to quaternary structure, monomer. Post-translationally, phosphoprotein with mostly four phosphate groups. While the DNA-binding activity is unaffected by the phosphorylation state, only the phosphorylated form of the protein is active for termination activity. Functioning seems to be regulated by phosphorylation. As to expression, predominantly expressed in heart and liver, with extremely low levels in other tissues. Expressed strongly in the heart and at lower levels in brain, liver and kidney.

It localises to the mitochondrion. In terms of biological role, transcription termination factor. Binds to a 28 bp region within the tRNA(Leu(uur)) gene at a position immediately adjacent to and downstream of the 16S rRNA gene; this region comprises a tridecamer sequence critical for directing accurate termination. Binds DNA along the major grove and promotes DNA bending and partial unwinding. Promotes base flipping. Transcription termination activity appears to be polarized with highest specificity for transcripts initiated on the light strand. This chain is Transcription termination factor 1a, mitochondrial (Mterf1a), found in Mus musculus (Mouse).